The following is a 379-amino-acid chain: Probable protein phosphatase 2C 46 (379 aa).

The signal sequence occupies residues 1–20 (MLSTLMKLLSACLWPSSSSG). One can recognise a PPM-type phosphatase domain in the interval 42–353 (LVGEFSMAVV…DDITVVIIFL (312 aa)). Serine 73 carries the post-translational modification Phosphoserine. Mn(2+) contacts are provided by aspartate 84, glycine 85, aspartate 285, and aspartate 344.

It belongs to the PP2C family. Interacts with SAUR19. Mg(2+) serves as cofactor. It depends on Mn(2+) as a cofactor.

The catalysed reaction is O-phospho-L-seryl-[protein] + H2O = L-seryl-[protein] + phosphate. It carries out the reaction O-phospho-L-threonyl-[protein] + H2O = L-threonyl-[protein] + phosphate. Its function is as follows. May dephosphorylate and repress plasma membrane H(+)-ATPases (PM H(+)-ATPases, e.g. AHA1 and AHA2), thus influencing negatively plant growth and fitness. This chain is Probable protein phosphatase 2C 46, found in Arabidopsis thaliana (Mouse-ear cress).